A 212-amino-acid chain; its full sequence is Cytidylate kinase (212 aa).

An ATP-binding site is contributed by 7 to 15 (GPAASGKGT).

Belongs to the cytidylate kinase family. Type 1 subfamily.

The protein localises to the cytoplasm. It catalyses the reaction CMP + ATP = CDP + ADP. The enzyme catalyses dCMP + ATP = dCDP + ADP. This is Cytidylate kinase from Rhodopseudomonas palustris (strain BisB18).